The primary structure comprises 424 residues: Zona pellucida sperm-binding protein 3 (424 aa).

Residues 1–22 (MELSYRLFICLLLWGSTELCYP) form the signal peptide. Position 23 is a pyrrolidone carboxylic acid (glutamine 23). The Extracellular segment spans residues 23–387 (QPLWLLQGGA…QWALPSDTSV (365 aa)). One can recognise a ZP domain in the interval 45–307 (ECQEATLMVM…KACSFSKPSN (263 aa)). 2 cysteine pairs are disulfide-bonded: cysteine 46/cysteine 140 and cysteine 78/cysteine 99. N-linked (GlcNAc...) asparagine glycosylation is found at asparagine 125 and asparagine 147. Residues threonine 156, threonine 162, and threonine 163 are each glycosylated (O-linked (GalNAc...) threonine). 2 disulfide bridges follow: cysteine 217–cysteine 282 and cysteine 239–cysteine 300. Asparagine 272 carries an N-linked (GlcNAc...) asparagine glycan. The tract at residues 330–356 (PSHSRRQPHVMSQWSRSASRNRRHVTE) is disordered. The propeptide at 351–424 (RRHVTEEADV…TASHPVSASE (74 aa)) is removed in mature form. A helical transmembrane segment spans residues 388–408 (VLLGVGLAVVVSLTLTAVILV). Residues 409 to 424 (LTRRCRTASHPVSASE) are Cytoplasmic-facing.

This sequence belongs to the ZP domain family. ZPC subfamily. As to quaternary structure, polymers of ZP2 and ZP3 organized into long filaments cross-linked by ZP1 homodimers. Interacts with ZP1 and ZP2. Proteolytically cleaved before the transmembrane segment to yield the secreted ectodomain incorporated in the zona pellucida. Post-translationally, N-glycosylated. In terms of processing, O-glycosylated; removal of O-linked glycans may play an important role in the post-fertilization block to polyspermy. Expressed in oocytes (at protein level).

It is found in the zona pellucida. The protein localises to the cell membrane. In terms of biological role, component of the zona pellucida, an extracellular matrix surrounding oocytes which mediates sperm binding, induction of the acrosome reaction and prevents post-fertilization polyspermy. The zona pellucida is composed of 3 to 4 glycoproteins, ZP1, ZP2, ZP3, and ZP4. ZP3 is essential for sperm binding and zona matrix formation. The chain is Zona pellucida sperm-binding protein 3 (ZP3) from Homo sapiens (Human).